Consider the following 87-residue polypeptide: Olfactory receptor-like protein HbT2 (87 aa).

The Cytoplasmic segment spans residues 1–8; it reads KLWRMTGT. The helical transmembrane segment at 9 to 29 threads the bilayer; the sequence is WLGGFCHSIIQIPVIIQLPFC. Residues 30–55 lie on the Extracellular side of the membrane; the sequence is GPNVIDHYFRDLQPLFKLACTDTFME. The helical transmembrane segment at 56–76 threads the bilayer; that stretch reads GVIVLAFSGLFSVFSFLILVS. Residues 77–87 are Cytoplasmic-facing; it reads SYIVILVNLRN.

This sequence belongs to the G-protein coupled receptor 1 family.

The protein resides in the cell membrane. Its function is as follows. Odorant receptor. This is Olfactory receptor-like protein HbT2 from Apis mellifera ligustica (Common honeybee).